Reading from the N-terminus, the 444-residue chain is UPF0053 protein YhdP (444 aa).

A CNNM transmembrane domain is found at 1–201 (MDIVNLILVA…YKSGEINQSE (201 aa)). 3 helical membrane passes run 7 to 27 (ILVA…FAII), 61 to 81 (ACQL…ESTI), and 101 to 121 (VISF…VGEL). CBS domains are found at residues 220–282 (MIPR…SVDS) and 284–344 (ISQF…IRDE).

It belongs to the UPF0053 family.

Its subcellular location is the cell membrane. This is UPF0053 protein YhdP (yhdP) from Bacillus subtilis (strain 168).